The primary structure comprises 334 residues: Glyoxylate reductase (334 aa).

NADP(+)-binding positions include 158–161 (FGRI), 180–182 (SRT), and 239–241 (IAR). Residues arginine 241 and glutamate 270 contribute to the active site. The active-site Proton donor is histidine 288. 288–290 (HIG) is an NADP(+) binding site.

The protein belongs to the D-isomer specific 2-hydroxyacid dehydrogenase family. GyaR subfamily. Homodimer.

The protein localises to the cytoplasm. It catalyses the reaction glycolate + NAD(+) = glyoxylate + NADH + H(+). In Thermococcus onnurineus (strain NA1), this protein is Glyoxylate reductase.